Reading from the N-terminus, the 132-residue chain is Ribosome-binding factor A (132 aa).

This sequence belongs to the RbfA family. As to quaternary structure, monomer. Binds 30S ribosomal subunits, but not 50S ribosomal subunits or 70S ribosomes.

It is found in the cytoplasm. Functionally, one of several proteins that assist in the late maturation steps of the functional core of the 30S ribosomal subunit. Associates with free 30S ribosomal subunits (but not with 30S subunits that are part of 70S ribosomes or polysomes). Required for efficient processing of 16S rRNA. May interact with the 5'-terminal helix region of 16S rRNA. The sequence is that of Ribosome-binding factor A from Pseudomonas putida (strain GB-1).